Here is a 205-residue protein sequence, read N- to C-terminus: High frequency lysogenization protein HflD homolog (205 aa).

It belongs to the HflD family.

It localises to the cytoplasm. Its subcellular location is the cell inner membrane. This is High frequency lysogenization protein HflD homolog from Vibrio parahaemolyticus serotype O3:K6 (strain RIMD 2210633).